We begin with the raw amino-acid sequence, 503 residues long: Carboxyl-terminal PDZ ligand of neuronal nitric oxide synthase protein (503 aa).

The 166-residue stretch at 26 to 191 (FQHGISFEAK…ESERNSDGSG (166 aa)) folds into the PID domain. The segment at 170-212 (HTQQNADGQEDGESERNSDGSGDPGRQLTGAERVSTAAAEETD) is disordered. 4 positions are modified to phosphoserine: Ser-183, Ser-187, Ser-190, and Ser-262. Residues 318–359 (AAEAAARLEAQARVHQLLLQNKDMLQHISLLVKQVQELELKL) adopt a coiled-coil conformation. Residues Ser-367, Ser-370, Ser-397, and Ser-413 each carry the phosphoserine modification. The segment at 491–503 (QELGDSLDDEIAV) is interaction with NOS1. The PDZ-binding motif lies at 501–503 (IAV).

In terms of assembly, interacts with the PDZ domain of NOS1 or the second PDZ domain of DLG4 through its C-terminus. Interacts with RASD1 and SYN1, SYN2 and SYN3 via its PID domain. Forms a ternary complex with NOS1 and SYN1. Forms a ternary complex with NOS1 and RASD1.

It is found in the cell projection. The protein localises to the filopodium. The protein resides in the podosome. Adapter protein involved in neuronal nitric-oxide (NO) synthesis regulation via its association with nNOS/NOS1. The complex formed with NOS1 and synapsins is necessary for specific NO and synapsin functions at a presynaptic level. Mediates an indirect interaction between NOS1 and RASD1 leading to enhance the ability of NOS1 to activate RASD1. Competes with DLG4 for interaction with NOS1, possibly affecting NOS1 activity by regulating the interaction between NOS1 and DLG4. In kidney podocytes, plays a role in podosomes and filopodia formation through CDC42 activation. The protein is Carboxyl-terminal PDZ ligand of neuronal nitric oxide synthase protein of Mus musculus (Mouse).